Here is a 102-residue protein sequence, read N- to C-terminus: MAKQKIRIRLRAFDHKILDSSAAKIVETAIRTGATVSGPIPLPTEKSIYTILTAPNGEKDIREQFEMRTHKRLIDIVEPGSKTVEALMKLDLPAGVDIEIKL.

Belongs to the universal ribosomal protein uS10 family. In terms of assembly, part of the 30S ribosomal subunit.

Its function is as follows. Involved in the binding of tRNA to the ribosomes. In Symbiobacterium thermophilum (strain DSM 24528 / JCM 14929 / IAM 14863 / T), this protein is Small ribosomal subunit protein uS10.